A 176-amino-acid chain; its full sequence is NAD(P)H-quinone oxidoreductase subunit 6, chloroplastic (176 aa).

5 consecutive transmembrane segments (helical) span residues 10 to 30 (ILML…VLLT), 33 to 53 (IYSA…YFLL), 60 to 80 (VAQL…AVMF), 95 to 115 (IGDG…MTTI), and 152 to 172 (FYLP…GAIT).

This sequence belongs to the complex I subunit 6 family. As to quaternary structure, NDH is composed of at least 16 different subunits, 5 of which are encoded in the nucleus.

It is found in the plastid. The protein resides in the chloroplast thylakoid membrane. The catalysed reaction is a plastoquinone + NADH + (n+1) H(+)(in) = a plastoquinol + NAD(+) + n H(+)(out). The enzyme catalyses a plastoquinone + NADPH + (n+1) H(+)(in) = a plastoquinol + NADP(+) + n H(+)(out). Functionally, NDH shuttles electrons from NAD(P)H:plastoquinone, via FMN and iron-sulfur (Fe-S) centers, to quinones in the photosynthetic chain and possibly in a chloroplast respiratory chain. The immediate electron acceptor for the enzyme in this species is believed to be plastoquinone. Couples the redox reaction to proton translocation, and thus conserves the redox energy in a proton gradient. In Hordeum vulgare (Barley), this protein is NAD(P)H-quinone oxidoreductase subunit 6, chloroplastic (ndhG).